Here is an 82-residue protein sequence, read N- to C-terminus: Neuromacin (82 aa).

A signal peptide spans 1–23; sequence MALLNKLLCFALVFMIFGEFVTP. Intrachain disulfides connect cysteine 25–cysteine 32, cysteine 47–cysteine 51, cysteine 61–cysteine 69, and cysteine 79–cysteine 81.

It belongs to the macin family.

Its subcellular location is the secreted. The protein is Neuromacin of Hirudo medicinalis (Medicinal leech).